A 469-amino-acid polypeptide reads, in one-letter code: MTQDGTWSDESDWELDDADLADLAEAAPAPVLAIVGRPNVGKSTLVNRILGRREAVVQDIPGVTRDRVSYDALWNGRRFVVQDTGGWEPDAKGLQQLVAEQASVAMRTADAVVLVVDATVGATTADEAAARILLRSGKPVFLAANKVDSDKAEADAATLWSMGLGEPHAISAMHGRGVANLLDTVLKKLPEVAESVSAGGGPRRVALVGKPNVGKSSLLNKLAGDERSVVHDVAGTTVDPVDSLIELGGKVWRFVDTAGLRRKVGQASGHEFYASVRTRGAIDAAEVVVLLIDASQPLTEQDLRVLSMVIEAGRAVVLAYNKWDLVDEDRRDLLDREIDRELVQIRWAQRVNISAKTGRAVQKLVPAMETALASWDTRIPTGPLNSWIKEVVAATPPPVRGGKQPRILFATQATARPPTFVLFTTGFLEAGYRRFLERRLRETFGFEGSPIRINVRVREKRGAKRPGRR.

2 consecutive EngA-type G domains span residues 30–193 (PVLA…PEVA) and 203–376 (RRVA…ASWD). GTP-binding positions include 36–43 (GRPNVGKS), 83–87 (DTGGW), 145–148 (NKVD), 209–216 (GKPNVGKS), 256–260 (DTAGL), and 321–324 (NKWD). The KH-like domain maps to 377–459 (TRIPTGPLNS…PIRINVRVRE (83 aa)).

This sequence belongs to the TRAFAC class TrmE-Era-EngA-EngB-Septin-like GTPase superfamily. EngA (Der) GTPase family. In terms of assembly, associates with the 50S ribosomal subunit.

GTPase that plays an essential role in the late steps of ribosome biogenesis. The chain is GTPase Der from Mycobacterium ulcerans (strain Agy99).